Here is a 145-residue protein sequence, read N- to C-terminus: 3-hydroxyacyl-[acyl-carrier-protein] dehydratase FabZ (145 aa).

The active site involves His-47.

It belongs to the thioester dehydratase family. FabZ subfamily.

It localises to the cytoplasm. The enzyme catalyses a (3R)-hydroxyacyl-[ACP] = a (2E)-enoyl-[ACP] + H2O. Functionally, involved in unsaturated fatty acids biosynthesis. Catalyzes the dehydration of short chain beta-hydroxyacyl-ACPs and long chain saturated and unsaturated beta-hydroxyacyl-ACPs. The protein is 3-hydroxyacyl-[acyl-carrier-protein] dehydratase FabZ of Chromohalobacter salexigens (strain ATCC BAA-138 / DSM 3043 / CIP 106854 / NCIMB 13768 / 1H11).